The following is a 452-amino-acid chain: UDP-N-acetylmuramoyl-tripeptide--D-alanyl-D-alanine ligase (452 aa).

ATP is bound at residue 107-113; that stretch reads GSSGKTS.

The protein belongs to the MurCDEF family. MurF subfamily. Monomer.

The protein localises to the cytoplasm. The catalysed reaction is D-alanyl-D-alanine + UDP-N-acetyl-alpha-D-muramoyl-L-alanyl-gamma-D-glutamyl-meso-2,6-diaminopimelate + ATP = UDP-N-acetyl-alpha-D-muramoyl-L-alanyl-gamma-D-glutamyl-meso-2,6-diaminopimeloyl-D-alanyl-D-alanine + ADP + phosphate + H(+). It participates in cell wall biogenesis; peptidoglycan biosynthesis. Functionally, involved in cell wall formation. Catalyzes the final step in the synthesis of UDP-N-acetylmuramoyl-pentapeptide, the precursor of murein. The protein is UDP-N-acetylmuramoyl-tripeptide--D-alanyl-D-alanine ligase of Escherichia coli (strain K12).